We begin with the raw amino-acid sequence, 120 residues long: Small ribosomal subunit protein uS13 (120 aa).

Residues 94-120 (GLPLRGQRTRTNARTRKGPRKAIAGKK) are disordered.

Belongs to the universal ribosomal protein uS13 family. In terms of assembly, part of the 30S ribosomal subunit. Forms a loose heterodimer with protein S19. Forms two bridges to the 50S subunit in the 70S ribosome.

In terms of biological role, located at the top of the head of the 30S subunit, it contacts several helices of the 16S rRNA. In the 70S ribosome it contacts the 23S rRNA (bridge B1a) and protein L5 of the 50S subunit (bridge B1b), connecting the 2 subunits; these bridges are implicated in subunit movement. Contacts the tRNAs in the A and P-sites. This Aromatoleum aromaticum (strain DSM 19018 / LMG 30748 / EbN1) (Azoarcus sp. (strain EbN1)) protein is Small ribosomal subunit protein uS13.